Reading from the N-terminus, the 336-residue chain is Anthranilate phosphoribosyltransferase (336 aa).

Residues G82, G85–D86, T90, N92–T95, K110–S118, and S122 each bind 5-phospho-alpha-D-ribose 1-diphosphate. G82 is an anthranilate binding site. S94 contacts Mg(2+). N113 contributes to the anthranilate binding site. R168 contacts anthranilate. Mg(2+) is bound by residues D227 and E228.

It belongs to the anthranilate phosphoribosyltransferase family. Homodimer. Requires Mg(2+) as cofactor.

The enzyme catalyses N-(5-phospho-beta-D-ribosyl)anthranilate + diphosphate = 5-phospho-alpha-D-ribose 1-diphosphate + anthranilate. Its pathway is amino-acid biosynthesis; L-tryptophan biosynthesis; L-tryptophan from chorismate: step 2/5. Its function is as follows. Catalyzes the transfer of the phosphoribosyl group of 5-phosphorylribose-1-pyrophosphate (PRPP) to anthranilate to yield N-(5'-phosphoribosyl)-anthranilate (PRA). The chain is Anthranilate phosphoribosyltransferase from Leptospira borgpetersenii serovar Hardjo-bovis (strain JB197).